The primary structure comprises 106 residues: ATP-dependent Clp protease adapter protein ClpS (106 aa).

The protein belongs to the ClpS family. In terms of assembly, binds to the N-terminal domain of the chaperone ClpA.

Its function is as follows. Involved in the modulation of the specificity of the ClpAP-mediated ATP-dependent protein degradation. In Aliivibrio fischeri (strain ATCC 700601 / ES114) (Vibrio fischeri), this protein is ATP-dependent Clp protease adapter protein ClpS.